Reading from the N-terminus, the 574-residue chain is Sulfite reductase [NADPH] hemoprotein beta-component (574 aa).

Residues C439, C445, C484, and C488 each coordinate [4Fe-4S] cluster. C488 is a binding site for siroheme.

It belongs to the nitrite and sulfite reductase 4Fe-4S domain family. In terms of assembly, alpha(8)-beta(8). The alpha component is a flavoprotein, the beta component is a hemoprotein. Siroheme serves as cofactor. It depends on [4Fe-4S] cluster as a cofactor.

It catalyses the reaction hydrogen sulfide + 3 NADP(+) + 3 H2O = sulfite + 3 NADPH + 4 H(+). It functions in the pathway sulfur metabolism; hydrogen sulfide biosynthesis; hydrogen sulfide from sulfite (NADPH route): step 1/1. Its function is as follows. Component of the sulfite reductase complex that catalyzes the 6-electron reduction of sulfite to sulfide. This is one of several activities required for the biosynthesis of L-cysteine from sulfate. This Paenibacillus sp. (strain JDR-2) protein is Sulfite reductase [NADPH] hemoprotein beta-component.